The sequence spans 64 residues: Large ribosomal subunit protein bL28 (64 aa).

The protein belongs to the bacterial ribosomal protein bL28 family.

The sequence is that of Large ribosomal subunit protein bL28 from Persephonella marina (strain DSM 14350 / EX-H1).